Here is a 180-residue protein sequence, read N- to C-terminus: MGLTISSLFSRLFGKKQMRILMVGLDAAGKTTILYKLKLGEIVTTIPTIGFNVETVEYKNICFTVWDVGGQDKIRPLWRHYFQNTQGLIFVVDSNDRERIQEGAEELQKMLQEDELRDAVLLLFANKQDLPNAMAISEMTDKLGLQSLRNRTWYVQATCATQGTGLYEGLDWLSNELSKR.

Residue G2 is the site of N-myristoyl glycine attachment. Residues 24 to 31 (GLDAAGKT), 67 to 71 (DVGGQ), and 126 to 129 (NKQD) each bind GTP. S147 carries the phosphoserine modification.

The protein belongs to the small GTPase superfamily. Arf family. In terms of assembly, forms a complex containing RAB11A, ASAP1, RAB3IP, RAP11FIP3 and ARF4; the complex promotes preciliary trafficking; the complex binds to RHO in photoreceptor cells and promotes RHO ciliary transport.

It is found in the golgi apparatus. The protein resides in the membrane. Functionally, GTP-binding protein that functions as an allosteric activator of the cholera toxin catalytic subunit, an ADP-ribosyltransferase. Involved in protein trafficking; may modulate vesicle budding and uncoating within the Golgi apparatus. Part of the ciliary targeting complex containing Rab11, ASAP1, Rabin8/RAB3IP, RAB11FIP3 and ARF4, which direct preciliary vesicle trafficking to mother centriole and ciliogenesis initiation. In Bos taurus (Bovine), this protein is ADP-ribosylation factor 4 (ARF4).